Consider the following 164-residue polypeptide: Nucleotide-binding protein Daro_3028 (164 aa).

This sequence belongs to the YajQ family.

Functionally, nucleotide-binding protein. The protein is Nucleotide-binding protein Daro_3028 of Dechloromonas aromatica (strain RCB).